The sequence spans 593 residues: uncharacterized protein (593 aa).

12 helical membrane passes run 21–41, 60–80, 97–117, 148–168, 204–224, 243–263, 275–295, 328–348, 359–379, 410–430, 457–477, and 485–505; these read PAVFIPASVVIVAMIVVSVVY, VGWWYILVATGFVVFALYCGI, FSFWAWLAMLFSAGMGIGLVF, MALTVFHWGLHAWAIYVVVGL, VDVIAIVGTLFGVATSLGFGI, WMVGMIAAITATATASVVSGV, MALAAALALFVLLLGPTLFLL, WTIFYWGWWISWAPFVGMFIA, FIGAVLLVPTVIASLWFTIFG, GLPIGAITSVLAVLVIVFFFV, VYWAVLEGVAAAVLLLIGGAG, and AAIATALPFSIVMVVACYAMT.

Belongs to the BCCT transporter (TC 2.A.15) family.

It localises to the cell membrane. This is an uncharacterized protein from Mycobacterium tuberculosis (strain CDC 1551 / Oshkosh).